Reading from the N-terminus, the 130-residue chain is Small ribosomal subunit protein uS11 (130 aa).

The protein belongs to the universal ribosomal protein uS11 family. Part of the 30S ribosomal subunit. Interacts with proteins S7 and S18. Binds to IF-3.

Functionally, located on the platform of the 30S subunit, it bridges several disparate RNA helices of the 16S rRNA. Forms part of the Shine-Dalgarno cleft in the 70S ribosome. The sequence is that of Small ribosomal subunit protein uS11 from Latilactobacillus sakei subsp. sakei (strain 23K) (Lactobacillus sakei subsp. sakei).